The chain runs to 494 residues: Endoglucanase 22 (494 aa).

The first 21 residues, methionine 1–serine 21, serve as a signal peptide directing secretion. The active-site Nucleophile is aspartate 76. Histidine 413 is a catalytic residue. Residue asparagine 468 is glycosylated (N-linked (GlcNAc...) asparagine). Residue glutamate 473 is part of the active site.

The protein belongs to the glycosyl hydrolase 9 (cellulase E) family.

The protein resides in the secreted. It catalyses the reaction Endohydrolysis of (1-&gt;4)-beta-D-glucosidic linkages in cellulose, lichenin and cereal beta-D-glucans.. This is Endoglucanase 22 (GH9B16) from Arabidopsis thaliana (Mouse-ear cress).